We begin with the raw amino-acid sequence, 320 residues long: uncharacterized protein (320 aa).

7 helical membrane passes run 24-44, 65-85, 105-125, 132-152, 179-199, 226-246, and 253-275; these read FEFS…IFFI, FVLS…LWSL, TTSC…FIVV, SWFV…IAIL, ISLT…IYTF, MIPI…YFGY, and TSRW…MLSL.

It is found in the membrane. This is an uncharacterized protein from Caenorhabditis elegans.